A 550-amino-acid polypeptide reads, in one-letter code: Glucose-6-phosphate isomerase 1 (550 aa).

The Proton donor role is filled by Glu-358. Active-site residues include His-389 and Lys-513.

This sequence belongs to the GPI family.

It localises to the cytoplasm. It carries out the reaction alpha-D-glucose 6-phosphate = beta-D-fructose 6-phosphate. Its pathway is carbohydrate biosynthesis; gluconeogenesis. The protein operates within carbohydrate degradation; glycolysis; D-glyceraldehyde 3-phosphate and glycerone phosphate from D-glucose: step 2/4. Catalyzes the reversible isomerization of glucose-6-phosphate to fructose-6-phosphate. This is Glucose-6-phosphate isomerase 1 from Streptomyces coelicolor (strain ATCC BAA-471 / A3(2) / M145).